The primary structure comprises 166 residues: Large ribosomal subunit protein uL10 (166 aa).

The protein belongs to the universal ribosomal protein uL10 family. In terms of assembly, part of the ribosomal stalk of the 50S ribosomal subunit. The N-terminus interacts with L11 and the large rRNA to form the base of the stalk. The C-terminus forms an elongated spine to which L12 dimers bind in a sequential fashion forming a multimeric L10(L12)X complex.

In terms of biological role, forms part of the ribosomal stalk, playing a central role in the interaction of the ribosome with GTP-bound translation factors. This Lysinibacillus sphaericus (strain C3-41) protein is Large ribosomal subunit protein uL10.